Reading from the N-terminus, the 964-residue chain is Collagen alpha-1(I) chain (964 aa).

Residues Gly-1–Pro-964 form a disordered region. A 4-hydroxyproline mark is found at Pro-18, Pro-21, Pro-24, Pro-33, Pro-36, Pro-39, Pro-53, Pro-68, Pro-74, Pro-83, and Pro-89. The segment covering Asn-56–Glu-70 has biased composition (basic and acidic residues). Lys-92 bears the 5-hydroxylysine; alternate mark. O-linked (Gal...) hydroxylysine; alternate glycosylation is present at Lys-92. Position 98 is a phosphoserine (Ser-98). 2 stretches are compositionally biased toward low complexity: residues Asp-106–Pro-117 and Pro-126–Ala-144. A 4-hydroxyproline mark is found at Pro-126, Pro-147, Pro-156, Pro-159, Pro-186, Pro-189, Pro-201, Pro-207, Pro-216, Pro-222, Pro-225, and Pro-240. Pro residues predominate over residues Pro-146–Phe-158. Over residues Ala-192–Ser-231 the composition is skewed to low complexity. Residue Lys-243 is modified to 5-hydroxylysine. 8 positions are modified to 4-hydroxyproline: Pro-249, Pro-252, Pro-260, Pro-269, Pro-284, Pro-290, Pro-299, and Pro-305. Residues Gly-294–Gly-303 show a composition bias toward gly residues. Lys-314 bears the 5-hydroxylysine mark. Residues Pro-323, Pro-332, Pro-338, Pro-344, Pro-353, Pro-356, Pro-365, Pro-374, Pro-379, Pro-391, Pro-400, Pro-409, Pro-412, Pro-430, Pro-447, Pro-453, Pro-459, Pro-465, Pro-471, Pro-477, Pro-489, Pro-498, Pro-510, and Pro-519 each carry the 4-hydroxyproline modification. The span at Lys-347–Arg-373 shows a compositional bias: low complexity. The segment covering Ala-381–Pro-400 has biased composition (low complexity). Residues Pro-459–Gln-468 are compositionally biased toward low complexity. Lys-531 carries the 5-hydroxylysine modification. Pro-537, Pro-552, and Pro-558 each carry 4-hydroxyproline. Low complexity predominate over residues Ser-564 to Ala-578. Residue Ser-567 is modified to Phosphoserine. 4-hydroxyproline is present on residues Pro-579, Pro-585, Pro-588, Pro-597, Pro-603, Pro-621, Pro-630, and Pro-639. Low complexity predominate over residues Ala-591–Ala-618. A compositionally biased stretch (pro residues) spans Pro-620–Pro-632. At Lys-642 the chain carries 5-hydroxylysine. The segment covering Ser-647–Val-663 has biased composition (low complexity). A 4-hydroxyproline mark is found at Pro-651 and Pro-657. A 3-hydroxyproline modification is found at Pro-665. 15 positions are modified to 4-hydroxyproline: Pro-666, Pro-675, Pro-678, Pro-704, Pro-712, Pro-721, Pro-739, Pro-748, Pro-751, Pro-757, Pro-772, Pro-778, Pro-784, Pro-792, and Pro-798. Residues Lys-709 to Pro-721 show a composition bias toward low complexity. The segment covering Pro-771–Ala-781 has biased composition (pro residues). At Lys-807 the chain carries 5-hydroxylysine. Over residues Pro-815 to Val-830 the composition is skewed to pro residues. A 4-hydroxyproline mark is found at Pro-818, Pro-821, and Pro-824. Low complexity predominate over residues Ala-850–Pro-864. The span at Arg-865–Ile-879 shows a compositional bias: basic and acidic residues. A 5-hydroxylysine modification is found at Lys-868. A 5-hydroxylysine; alternate modification is found at Lys-880. An O-linked (Gal...) hydroxylysine; alternate glycan is attached at Lys-880. A 4-hydroxyproline mark is found at Pro-895, Pro-898, Pro-916, and Pro-931. The segment covering Pro-898–Pro-931 has biased composition (low complexity). Pro-936 carries the post-translational modification 3-hydroxyproline. Pro-937 carries the 4-hydroxyproline modification. Residues Val-949–Pro-964 show a composition bias toward pro residues. The residue at position 951 (Pro-951) is a 3-hydroxyproline. 4-hydroxyproline is present on Pro-952. The residue at position 954 (Pro-954) is a 3-hydroxyproline. Pro-955 is subject to 4-hydroxyproline. Pro-957 carries the 3-hydroxyproline modification. 4-hydroxyproline occurs at positions 958, 961, and 964.

This sequence belongs to the fibrillar collagen family. In terms of assembly, trimers of one alpha 2(I) and two alpha 1(I) chains. Post-translationally, contains mostly 4-hydroxyproline. Proline residues at the third position of the tripeptide repeating unit (G-X-Y) are hydroxylated in some or all of the chains. In terms of processing, contains 3-hydroxyproline at a few sites. This modification occurs on the first proline residue in the sequence motif Gly-Pro-Hyp, where Hyp is 4-hydroxyproline. Lysine residues at the third position of the tripeptide repeating unit (G-X-Y) are 5-hydroxylated in some or all of the chains. Post-translationally, O-glycosylated on hydroxylated lysine residues. The O-linked glycan consists of a Glc-Gal disaccharide. Expressed in bones.

It localises to the secreted. The protein resides in the extracellular space. The protein localises to the extracellular matrix. Functionally, type I collagen is a member of group I collagen (fibrillar forming collagen). This chain is Collagen alpha-1(I) chain, found in Parocnus serus (Greater Haitian ground sloth).